The chain runs to 161 residues: Ribonuclease H (161 aa).

Residues 11–152 (GPRPVVIHTD…ADQLARDGLT (142 aa)) form the RNase H type-1 domain. Residues aspartate 20, glutamate 58, aspartate 80, and aspartate 144 each contribute to the Mg(2+) site. The segment at 137–161 (HDENERADQLARDGLTENRMKSRIG) is disordered.

This sequence belongs to the RNase H family. Monomer. Requires Mg(2+) as cofactor.

It is found in the cytoplasm. It carries out the reaction Endonucleolytic cleavage to 5'-phosphomonoester.. Endonuclease that specifically degrades the RNA of RNA-DNA hybrids. This chain is Ribonuclease H, found in Rhodopseudomonas palustris (strain HaA2).